The following is a 168-amino-acid chain: Sperm acrosome-associated protein 9 (168 aa).

In terms of assembly, microtubule inner protein component of sperm flagellar doublet microtubules. Interacts with CABP1 and CALR. Interacts with INCA1. Interacts with microtubules. As to expression, expressed in sperm (at protein level). Expressed from almost all the cell types of testis, with abundant expression in round and elongated spermatids (at protein level). Predominantly expressed in tissues containing motile cilia.

Its subcellular location is the cytoplasm. The protein resides in the cytoplasmic vesicle. The protein localises to the secretory vesicle. It is found in the acrosome. It localises to the cytoskeleton. Its subcellular location is the cilium basal body. The protein resides in the flagellum axoneme. The protein localises to the cilium axoneme. It is found in the nucleus. In terms of biological role, microtubule inner protein (MIP) part of the dynein-decorated doublet microtubules (DMTs) of multiciliated respiratory cells and the distal singlet microtubules of monoflagellated spermatozoa. Forms an extensive interaction network cross-linking the lumen of axonemal doublet microtubules. In Mus musculus (Mouse), this protein is Sperm acrosome-associated protein 9.